An 848-amino-acid chain; its full sequence is Translation initiation factor IF-2 (848 aa).

A disordered region spans residues 1-265; the sequence is MSDTDGKKPL…GNQRAEKQVR (265 aa). Basic and acidic residues predominate over residues 89–162; sequence KAREVEEAAQ…AEIAKPKTEA (74 aa). Residues 163–179 show a composition bias toward low complexity; it reads RPATPADRAAAEAAAVR. Residues 191–219 are compositionally biased toward basic and acidic residues; the sequence is RKTDRDRDTRGGGGDDRDSRNKGRDDSRR. The tr-type G domain maps to 346-514; the sequence is PRAPIITIMG…AIALQAEILE (169 aa). The interval 355-362 is G1; sequence GHVDHGKT. Residue 355-362 coordinates GTP; the sequence is GHVDHGKT. The tract at residues 380 to 384 is G2; sequence GITQH. Positions 402–405 are G3; sequence DTPG. Residues 402 to 406 and 456 to 459 each bind GTP; these read DTPGH and NKID. Residues 456–459 are G4; it reads NKID. The segment at 492-494 is G5; the sequence is SAK.

The protein belongs to the TRAFAC class translation factor GTPase superfamily. Classic translation factor GTPase family. IF-2 subfamily.

The protein localises to the cytoplasm. In terms of biological role, one of the essential components for the initiation of protein synthesis. Protects formylmethionyl-tRNA from spontaneous hydrolysis and promotes its binding to the 30S ribosomal subunits. Also involved in the hydrolysis of GTP during the formation of the 70S ribosomal complex. The chain is Translation initiation factor IF-2 from Paracoccus denitrificans (strain Pd 1222).